Consider the following 470-residue polypeptide: Cell division protein FtsP (470 aa).

Positions 1-29 (MKNCSRRQLLKTTLFSTALFSVPAPLLAA) form a signal peptide, tat-type signal.

The protein belongs to the FtsP family. Post-translationally, predicted to be exported by the Tat system. The position of the signal peptide cleavage has not been experimentally proven.

The protein localises to the periplasm. Functionally, cell division protein that is required for growth during stress conditions. May be involved in protecting or stabilizing the divisomal assembly under conditions of stress. The sequence is that of Cell division protein FtsP from Aggregatibacter aphrophilus (strain NJ8700) (Haemophilus aphrophilus).